An 862-amino-acid polypeptide reads, in one-letter code: Transcription initiation factor TFIID subunit 4B (862 aa).

The interval 100–241 is sufficient for interaction with ZNF628; it reads NTTTIQFPAN…TPSNEPNLKA (142 aa). Polar residues predominate over residues 219-237; the sequence is VTTLKPSSLGASSTPSNEP. The segment at 219–239 is disordered; that stretch reads VTTLKPSSLGASSTPSNEPNL. The TAFH domain maps to 256 to 353; that stretch reads LENVKKCKNF…CVQQTSSDMV (98 aa). The interval 511–533 is required for interaction with P65/RELA; sequence PGPVLSQPAGIPQAVQVKQLVVQ. The short motif at 516 to 556 is the Nuclear export signal element; it reads SQPAGIPQAVQVKQLVVQQPSGGNEKQVTTISHSSTLTIQK. Ser595 is subject to Phosphoserine. The Histone-fold domain occupies 653–702; it reads PFLFIGALQKRILDIGKKHDITELNSDAVNLISQATQERLRGLLEKLTAI. Positions 722 to 787 form a coiled coil; sequence TRSQLKFLEK…LAQIQHRDAN (66 aa). The required for interaction with TAF12 stretch occupies residues 830 to 862; that stretch reads PRITRICLRDLIFCMEQEREMKYSRALYLALLK.

Belongs to the TAF4 family. In terms of assembly, TFIID is composed of TATA binding protein (TBP) and a number of TBP-associated factors (TAFs). Heterodimerizes with TAF12/TFII20 via the C-terminal H2A-like histone-fold domain. This heterodimer forms a histone-like octamer with the TAF6/TAFII70-TAF9/TAFII31 heterodimer. Interacts with P65/RELA homodimers and P65/RELA-REL heterodimers. Interaction with POU2AF1, via its C-terminal activation domain, is required for octamer-dependent transcription. Interacts with ZNF628. Post-translationally, under stimulation by forskolin, Isoform 1 is phosphorylated by protein kinase A (PKA). Preferentially expressed in ovarian granulosa cells (at protein level). Highly expressed in B-cells.

Its subcellular location is the nucleus. It is found in the cytoplasm. Functionally, cell type-specific subunit of the general transcription factor TFIID that may function as a gene-selective coactivator in certain cells. TFIID is a multimeric protein complex that plays a central role in mediating promoter responses to various activators and repressors. TAF4B is a transcriptional coactivator of the p65/RELA NF-kappa-B subunit. Involved in the activation of a subset of antiapoptotic genes including TNFAIP3. May be involved in regulating folliculogenesis. Through interaction with OCBA/POU2AF1, acts as a coactivator of B-cell-specific transcription. Plays a role in spermiogenesis and oogenesis. This Homo sapiens (Human) protein is Transcription initiation factor TFIID subunit 4B (TAF4B).